A 328-amino-acid chain; its full sequence is D-cysteine desulfhydrase (328 aa).

N6-(pyridoxal phosphate)lysine is present on lysine 51.

It belongs to the ACC deaminase/D-cysteine desulfhydrase family. As to quaternary structure, homodimer. Pyridoxal 5'-phosphate is required as a cofactor.

It catalyses the reaction D-cysteine + H2O = hydrogen sulfide + pyruvate + NH4(+) + H(+). Catalyzes the alpha,beta-elimination reaction of D-cysteine and of several D-cysteine derivatives. It could be a defense mechanism against D-cysteine. This is D-cysteine desulfhydrase from Shigella flexneri serotype 5b (strain 8401).